Consider the following 485-residue polypeptide: MSLFDHSVSELHKKLNNKEISVTDLVEESYKRIADVEDNVKAFLTLDEENARAKAKELDAKIGAEDNGLLFGMPIGVKDNIVTNGLRTTCASKMLANFDPIYDATVVQKLKAADTITIGKLNMDEFAMGSSNENSGFYATKNPWNLDYVPGGSSGGSAAAVAAGEVLFSLGSDTGGSIRQPAAYCGVVGLKPTYGRVSRYGLVAFASSLDQIGPITRTVEDNAYLLQAISGLDRMDATSANVEVGNYLAGLTGDVKGLRIAVPKEYLGEGVGEEARESVLAALKVLEGMGATWEEVSLPHSKYALATYYLLSSSEASANLSRFDGVRYGVRSDNVNNLMDLYKNTRSEGFGDEVKRRIMLGTFALSSGYYDAYYKKAQQVRTLIKNDFENVFANYDVIIGPTTPTPAFKVGEKVDDPMTMYANDILTIPVNLAGVPAISVPCGFGANNMPLGLQIIGKHFDEATIYRVAHAFEQATDYHTKKASL.

Catalysis depends on charge relay system residues lysine 78 and serine 153. The active-site Acyl-ester intermediate is the serine 177.

It belongs to the amidase family. GatA subfamily. In terms of assembly, heterotrimer of A, B and C subunits.

It catalyses the reaction L-glutamyl-tRNA(Gln) + L-glutamine + ATP + H2O = L-glutaminyl-tRNA(Gln) + L-glutamate + ADP + phosphate + H(+). Allows the formation of correctly charged Gln-tRNA(Gln) through the transamidation of misacylated Glu-tRNA(Gln) in organisms which lack glutaminyl-tRNA synthetase. The reaction takes place in the presence of glutamine and ATP through an activated gamma-phospho-Glu-tRNA(Gln). The chain is Glutamyl-tRNA(Gln) amidotransferase subunit A from Bacillus cereus (strain ZK / E33L).